The sequence spans 349 residues: ALA-interacting subunit 3 (349 aa).

Residues 1–21 (MSSNTASSSAGAAGSGDSSAA) are compositionally biased toward low complexity. A disordered region spans residues 1 to 30 (MSSNTASSSAGAAGSGDSSAARKNSKRPKY). An N-acetylserine modification is found at Ser-2. Residues 50–70 (VISTFLIVSVIFIPLGVISLF) form a helical membrane-spanning segment. Residues Asn-181, Asn-190, and Asn-223 are each glycosylated (N-linked (GlcNAc...) asparagine). A helical membrane pass occupies residues 305 to 325 (LGIAYLTVGGICFILALAFTI).

It belongs to the CDC50/LEM3 family. In terms of assembly, interacts with ALA2 and ALA3 in a heterologous system. Expressed in roots, leaves, stems, flowers and siliques.

Its subcellular location is the golgi apparatus membrane. It localises to the prevacuolar compartment membrane. The protein resides in the endoplasmic reticulum membrane. Required for the lipid transport activity of the ALA/ALIS P4-ATPase complex. This chain is ALA-interacting subunit 3 (ALIS3), found in Arabidopsis thaliana (Mouse-ear cress).